Consider the following 154-residue polypeptide: MSASVELSSYRDQHFKGSRSEQERSLRGSCTLYVGNLSFYTTEEQIHELFSRCGDVRVIVMGLDKYKKTPCGFCFVEYYVRAEAEAAMRFVNGTRLDDRLIRVDWDAGFIEGRQYGRGKTGGQVRDEYRTDYDAGRGGYGKLLSQKIAPNTDNR.

MRNA is bound by residues Y10, Y33, 102–106, 113–117, and 123–124; these read RVDWD, RQYGR, and QV. The RRM domain occupies 30–108; the sequence is CTLYVGNLSF…RLIRVDWDAG (79 aa).

This sequence belongs to the RRM NCBP2 family. In terms of assembly, component of the nuclear cap-binding complex (CBC), a heterodimer composed of Cbp80 and Cbp20 that interacts with m7GpppG-capped RNA. Interacts with Ars2.

It is found in the nucleus. Component of the cap-binding complex (CBC), which binds co-transcriptionally to the 5' cap of pre-mRNAs and is involved in various processes such as pre-mRNA splicing and RNA-mediated gene silencing (RNAi). The CBC complex is involved in miRNA-mediated RNA interference via its interaction with Ars2 and is required for primary microRNAs (miRNAs) processing. Also involved in innate immunity via the short interfering RNAs (siRNAs) processing machinery by restricting the viral RNA production. In the CBC complex, Cbp20 recognizes and binds capped RNAs (m7GpppG-capped RNA) but requires Cbp80 to stabilize the movement of its N-terminal loop and lock the CBC into a high affinity cap-binding state with the cap structure. This is Nuclear cap-binding protein subunit 2 (Cbp20) from Drosophila erecta (Fruit fly).